Here is an 859-residue protein sequence, read N- to C-terminus: Protein EFR3 homolog (859 aa).

A compositionally biased stretch (polar residues) spans 696 to 714 (RKNDGSGDQWQNDTPNFDS). The disordered stretch occupies residues 696–728 (RKNDGSGDQWQNDTPNFDSTDGRESPSGYKTVG).

This sequence belongs to the EFR3 family.

The sequence is that of Protein EFR3 homolog from Caenorhabditis elegans.